We begin with the raw amino-acid sequence, 305 residues long: Spore coat protein CotA (305 aa).

It is found in the spore coat. Its subcellular location is the spore. The protein resides in the perispore. Contributes to maintain proper thickness of the spore coat. May contribute to the formation of polar appendages. May play an important role in assembly of the outer layers of the spore coat. The polypeptide is Spore coat protein CotA (Clostridioides difficile (strain 630) (Peptoclostridium difficile)).